A 312-amino-acid chain; its full sequence is Ribosomal protein L11 methyltransferase (312 aa).

S-adenosyl-L-methionine is bound by residues T159, G180, D201, and N244.

The protein belongs to the methyltransferase superfamily. PrmA family.

The protein resides in the cytoplasm. It carries out the reaction L-lysyl-[protein] + 3 S-adenosyl-L-methionine = N(6),N(6),N(6)-trimethyl-L-lysyl-[protein] + 3 S-adenosyl-L-homocysteine + 3 H(+). Methylates ribosomal protein L11. The protein is Ribosomal protein L11 methyltransferase of Desulfitobacterium hafniense (strain DSM 10664 / DCB-2).